A 750-amino-acid polypeptide reads, in one-letter code: Catalase A (750 aa).

The tract at residues 30-49 (ERDTADAHTQQPLTTDHGVR) is disordered. Residues His93 and Asn166 contribute to the active site. Tyr380 is a heme binding site.

The protein belongs to the catalase family. Heme is required as a cofactor.

The protein localises to the peroxisome matrix. The enzyme catalyses 2 H2O2 = O2 + 2 H2O. In terms of biological role, catalyzes the degradation of hydrogen peroxide (H(2)O(2)) generated by peroxisomal oxidases to water and oxygen, thereby protecting cells from the toxic effects of hydrogen peroxide. This is Catalase A (catA) from Aspergillus fumigatus (strain ATCC MYA-4609 / CBS 101355 / FGSC A1100 / Af293) (Neosartorya fumigata).